The following is a 597-amino-acid chain: Electron transfer flavoprotein-ubiquinone oxidoreductase, mitochondrial (597 aa).

53–67 contributes to the FAD binding site; it reads VVIVGGGPSGLSAAI. Residues 91–112 lie within the membrane without spanning it; that stretch reads IGGHTLSGAVIETRALDELIPN. G285 and G286 together coordinate a ubiquinone. The stretch at 409–426 is an intramembrane region; the sequence is IDPATYDKNIRDTYVVKE. Residues C540, C566, C569, and C572 each contribute to the [4Fe-4S] cluster site. The 30-residue stretch at 557–586 folds into the 4Fe-4S ferredoxin-type domain; the sequence is KRLQINAQNCIHCKTCDIKDPQQNINWVTP.

It belongs to the ETF-QO/FixC family. Monomer. Requires [4Fe-4S] cluster as cofactor. The cofactor is FAD.

The protein localises to the mitochondrion inner membrane. It catalyses the reaction a ubiquinone + reduced [electron-transfer flavoprotein] = a ubiquinol + oxidized [electron-transfer flavoprotein] + H(+). In terms of biological role, accepts electrons from ETF and reduces ubiquinone. This Caenorhabditis elegans protein is Electron transfer flavoprotein-ubiquinone oxidoreductase, mitochondrial (let-721).